A 123-amino-acid polypeptide reads, in one-letter code: Immunoglobulin lambda variable 9-49 (123 aa).

Residues 1–19 form the signal peptide; the sequence is MAWAPLLLTLLSLLTGSLS. A framework-1 region spans residues 20–44; sequence QPVLTQPPSASASLGASVTLTCTLS. Residues 21–123 enclose the Ig-like domain; the sequence is PVLTQPPSAS…ADHGSGSNFV (103 aa). Cys41 and Cys112 form a disulfide bridge. Residues 45–51 are complementarity-determining-1; it reads SGYSNYK. The tract at residues 52–68 is framework-2; sequence VDWYQQRPGKGPRFVMR. The interval 69 to 76 is complementarity-determining-2; sequence VGTGGIVG. Positions 77–112 are framework-3; that stretch reads SKGDGIPDRFSVLGSGLNRYLTIKNIQEEDESDYHC. Position 96 is a phosphotyrosine (Tyr96). Phosphothreonine is present on Thr98. Residues 113–123 form a complementarity-determining-3 region; it reads GADHGSGSNFV.

As to quaternary structure, immunoglobulins are composed of two identical heavy chains and two identical light chains; disulfide-linked.

It is found in the secreted. The protein localises to the cell membrane. V region of the variable domain of immunoglobulin light chains that participates in the antigen recognition. Immunoglobulins, also known as antibodies, are membrane-bound or secreted glycoproteins produced by B lymphocytes. In the recognition phase of humoral immunity, the membrane-bound immunoglobulins serve as receptors which, upon binding of a specific antigen, trigger the clonal expansion and differentiation of B lymphocytes into immunoglobulins-secreting plasma cells. Secreted immunoglobulins mediate the effector phase of humoral immunity, which results in the elimination of bound antigens. The antigen binding site is formed by the variable domain of one heavy chain, together with that of its associated light chain. Thus, each immunoglobulin has two antigen binding sites with remarkable affinity for a particular antigen. The variable domains are assembled by a process called V-(D)-J rearrangement and can then be subjected to somatic hypermutations which, after exposure to antigen and selection, allow affinity maturation for a particular antigen. This chain is Immunoglobulin lambda variable 9-49, found in Homo sapiens (Human).